We begin with the raw amino-acid sequence, 473 residues long: Probable lipid II flippase MurJ (473 aa).

The next 13 helical transmembrane spans lie at 31–51 (TFGASSTLDAYYVSIVFPFFL), 90–110 (LVTLLIVFLSEVFPYFMASIF), 125–145 (LIRLTAPFITIVFVWAVFYSV), 153–173 (FLPALTPMFSNVGVIVGCLFG), 177–197 (WAAAGFTIGGLAALLVLLPFG), 215–235 (FFGTFMTMAVSQVTTLIDVNV), 253–273 (LYQLPLGIFGVAVSTVALSTL), 300–320 (IGLMALSERIISLLFGYGAFT), 327–347 (SAQILFMYAIGLCFVSLFNLL), 360–380 (PFFATLLVSAVNISLDVILGF), 382–402 (MGASGIALATSVSYIAGFVFL), 414–434 (IFKISLASAVMGTVILLLRGS), and 439–459 (LGTIFLVLIGVFVYVLFSKLL).

It belongs to the MurJ/MviN family.

It localises to the cell inner membrane. It participates in cell wall biogenesis; peptidoglycan biosynthesis. In terms of biological role, involved in peptidoglycan biosynthesis. Transports lipid-linked peptidoglycan precursors from the inner to the outer leaflet of the cytoplasmic membrane. This is Probable lipid II flippase MurJ from Thermotoga maritima (strain ATCC 43589 / DSM 3109 / JCM 10099 / NBRC 100826 / MSB8).